A 52-amino-acid chain; its full sequence is uncharacterized protein (52 aa).

This is an uncharacterized protein from Treponema pallidum (strain Nichols).